Consider the following 741-residue polypeptide: MESCNCIEPQWPADELLMKYQYISDFFIAIAYFSIPLELIYFVKKSAVFPYRWVLVQFGAFIVLCGATHLINLWTFNMHSKTVEIVMTTAKIMTAVVSCATALMLVHIIPDLLSVKTRELFLKNKAAELDREMGLIRTQEETGRHVRMLTHEIRSTLDRHTILKTTLVELGRTLALEECALWMPTRTGLELQLSYTLRQQNPVGFTVPIHLPVINQVFSSNHAIKISPNSPIARLRPIAGKYMPGEVVGVRVPLLHLSNFQINDWPELSTKRYALMVLMLPSDSARQWHVHELELVEVVADQVAVALSHAAILEESMRARDLLMEQNVALDMARREAETAIRARNDFLAVMNHEMRTPMHAIIALSSLLQETELTPEQRLMVETVLKSSNLLATLINDVLDLSRLEDGSLQLDIGTFNLHALLREVHNLIKPIASVKKLCISLNVATDLPEYAVGDEKRLVQIILNVVGNAVKFSKEGNISITAFVAKSESLRDPRAPDFFPICGENQFYLRVQVKDSGLGINPQDIPRLFTKFAQTQPVATKNSGGSGLGLAICKRFVNLMEGHIWIDSEGPGKGCTATFVVKLGIPERSSEPKLLLMPKVPANHGQTNFSGLKVLLLDDNGVSRAVTRGLLAHLGCDVTTVSSSDELLRVVSQDYKVVFMDVCMPEVDGFEIAVRIHEKFMTRHERPLIVALTGNIDQVTKDNCTRVGMEGVVLKPVSIDKMRNVLSNLLEHRVLFEAI.

3 consecutive transmembrane segments (helical) span residues 23 to 43 (ISDF…IYFV), 53 to 73 (WVLV…LINL), and 92 to 112 (IMTA…IPDL). Cu cation-binding residues include cysteine 65 and histidine 69. The region spanning 158-307 (DRHTILKTTL…VVADQVAVAL (150 aa)) is the GAF domain. A Histidine kinase domain is found at 350–589 (VMNHEMRTPM…TFVVKLGIPE (240 aa)). Histidine 353 is modified (phosphohistidine; by autocatalysis). The region spanning 615 to 732 (KVLLLDDNGV…KMRNVLSNLL (118 aa)) is the Response regulatory domain. Aspartate 663 is modified (4-aspartylphosphate).

This sequence belongs to the ethylene receptor family. In terms of assembly, homodimer; disulfide-linked. Cu cation serves as cofactor. Post-translationally, activation probably requires a transfer of a phosphate group between a His in the transmitter domain and an Asp of the receiver domain.

The protein localises to the endoplasmic reticulum membrane. The catalysed reaction is ATP + protein L-histidine = ADP + protein N-phospho-L-histidine.. Functionally, may act early in the ethylene signal transduction pathway, possibly as an ethylene receptor, or as a regulator of the pathway. This chain is Ethylene receptor 2 (ETR2), found in Pelargonium hortorum (Common geranium).